We begin with the raw amino-acid sequence, 299 residues long: GTPase Era (299 aa).

An Era-type G domain is found at 9 to 177 (RSGSVAVIGR…VGDLLKLVPE (169 aa)). The G1 stretch occupies residues 17–24 (GRPNVGKS). 17–24 (GRPNVGKS) provides a ligand contact to GTP. The segment at 43 to 47 (QTTRH) is G2. The segment at 64-67 (DTPG) is G3. GTP contacts are provided by residues 64–68 (DTPGL) and 126–129 (NKVD). The interval 126–129 (NKVD) is G4. Positions 156-158 (VSA) are G5. The 85-residue stretch at 200-284 (VREQLMRQLG…FLETWVRVRE (85 aa)) folds into the KH type-2 domain.

The protein belongs to the TRAFAC class TrmE-Era-EngA-EngB-Septin-like GTPase superfamily. Era GTPase family. Monomer.

It localises to the cytoplasm. It is found in the cell inner membrane. An essential GTPase that binds both GDP and GTP, with rapid nucleotide exchange. Plays a role in 16S rRNA processing and 30S ribosomal subunit biogenesis and possibly also in cell cycle regulation and energy metabolism. The chain is GTPase Era from Xanthomonas axonopodis pv. citri (strain 306).